Reading from the N-terminus, the 192-residue chain is UPF0301 protein Bamb_0737 (192 aa).

This sequence belongs to the UPF0301 (AlgH) family.

The polypeptide is UPF0301 protein Bamb_0737 (Burkholderia ambifaria (strain ATCC BAA-244 / DSM 16087 / CCUG 44356 / LMG 19182 / AMMD) (Burkholderia cepacia (strain AMMD))).